Reading from the N-terminus, the 827-residue chain is Probable beta-glucosidase H (827 aa).

The active site involves Asp-223. Positions 387-546 (RLLTNAVMHF…DSAEMVRSAV (160 aa)) constitute a PA14 domain. Asn-471, Asn-594, Asn-600, and Asn-625 each carry an N-linked (GlcNAc...) asparagine glycan.

The protein belongs to the glycosyl hydrolase 3 family.

Its subcellular location is the secreted. It catalyses the reaction Hydrolysis of terminal, non-reducing beta-D-glucosyl residues with release of beta-D-glucose.. It functions in the pathway glycan metabolism; cellulose degradation. In terms of biological role, beta-glucosidases are one of a number of cellulolytic enzymes involved in the degradation of cellulosic biomass. Catalyzes the last step releasing glucose from the inhibitory cellobiose. The polypeptide is Probable beta-glucosidase H (bglH) (Aspergillus oryzae (strain ATCC 42149 / RIB 40) (Yellow koji mold)).